A 509-amino-acid chain; its full sequence is Pancreatic secretory granule membrane major glycoprotein GP2 (509 aa).

Positions 1–21 (MVGSYVLWLALASCILTLASP) are cleaved as a signal peptide. The segment at 36-56 (DPCQNYTLLDEPSRSTENTEG) is D10C. 10 disulfides stabilise this stretch: cysteine 38–cysteine 132, cysteine 60–cysteine 147, cysteine 82–cysteine 120, cysteine 88–cysteine 152, cysteine 113–cysteine 121, cysteine 162–cysteine 172, cysteine 166–cysteine 181, cysteine 183–cysteine 213, cysteine 201–cysteine 292, and cysteine 233–cysteine 256. Asparagine 40, asparagine 97, and asparagine 109 each carry an N-linked (GlcNAc...) asparagine glycan. The 45-residue stretch at 158–202 (ATDKCKNLCRPEEACSFLNGTWDCFCRSDLNSSDVHSLQPRLNCG) folds into the EGF-like domain. N-linked (GlcNAc...) asparagine glycosylation is found at asparagine 176, asparagine 188, and asparagine 232. The segment at 200-293 (NCGAKEIQVS…TILNINFQCA (94 aa)) is ZP-N. Residues 200–456 (NCGAKEIQVS…PCCSRSQQRS (257 aa)) enclose the ZP domain. Asparagine 263 and asparagine 314 each carry an N-linked (GlcNAc...) asparagine glycan. Positions 294 to 317 (YPLDMKVSLQTALHPIVSSLNISV) are flexible ZP-N/ZP-C linker. Residues 318–329 (DGEGEFTVRMAL) are internal hydrophobic patch (IHP). The segment at 318–456 (DGEGEFTVRM…PCCSRSQQRS (139 aa)) is ZP-C. Disulfide bonds link cysteine 373–cysteine 433, cysteine 394–cysteine 449, and cysteine 438–cysteine 445. Residues 463–471 (PARVLDLGP) are external hydrophobic patch (EHP). Aspartate 484 is lipidated: GPI-anchor amidated aspartate. A propeptide spans 485 to 509 (GTPSTAGFLLAWPMLLLPILLAELF) (removed in mature form).

As to quaternary structure, interacts with SYCN. Interacts with bacterial adhesin fimH. N-glycosylated. In terms of tissue distribution, expressed in pancreas.

The protein localises to the zymogen granule membrane. It localises to the secreted. Its subcellular location is the cell membrane. The protein resides in the apical cell membrane. It is found in the membrane raft. The protein localises to the endosome. Functionally, functions as an intestinal M-cell transcytotic receptor specific of type-I-piliated bacteria that participates in the mucosal immune response toward these bacteria. At the apical membrane of M-cells it binds fimH, a protein of the bacteria type I pilus tip. Internalizes bound bacteria, like E.coli and S.typhimurium, from the lumen of the intestine and delivers them, through M-cells, to the underlying organized lymphoid follicles where they are captured by antigen-presenting dendritic cells to elicit a mucosal immune response. This is Pancreatic secretory granule membrane major glycoprotein GP2 from Canis lupus familiaris (Dog).